The chain runs to 128 residues: Fluoride-specific ion channel FluC (128 aa).

4 helical membrane passes run 5–25 (IVAI…LSIG), 35–55 (LGTL…VVAF), 67–87 (LFVI…SVEV), and 96–116 (FGWA…LTGL). The Na(+) site is built by Gly-75 and Thr-78.

Belongs to the fluoride channel Fluc/FEX (TC 1.A.43) family.

It localises to the cell inner membrane. The enzyme catalyses fluoride(in) = fluoride(out). Its activity is regulated as follows. Na(+) is not transported, but it plays an essential structural role and its presence is essential for fluoride channel function. Functionally, fluoride-specific ion channel. Important for reducing fluoride concentration in the cell, thus reducing its toxicity. The polypeptide is Fluoride-specific ion channel FluC (Burkholderia mallei (strain NCTC 10247)).